The chain runs to 679 residues: Glycine--tRNA ligase beta subunit (679 aa).

Belongs to the class-II aminoacyl-tRNA synthetase family. As to quaternary structure, tetramer of two alpha and two beta subunits.

Its subcellular location is the cytoplasm. The enzyme catalyses tRNA(Gly) + glycine + ATP = glycyl-tRNA(Gly) + AMP + diphosphate. The chain is Glycine--tRNA ligase beta subunit from Streptococcus pyogenes serotype M28 (strain MGAS6180).